We begin with the raw amino-acid sequence, 1134 residues long: MSLTSAYQLKLAEKLTILNDRGQGVLIRMYNIKKTCSDSKSKPPFLLEKSMESCLKYINKKFPNIDVRNSTQHLGPVHREKAEIIRFLTNYYQSFVDVMEFRDHVYELLNTIDACQCHFDINLNFDFTRSYLDLIVTYTSVILLLSRIEDRRILIGMYNCAHEMLHGHSDPSFARLGQMVLEYDHPLKKLTEEFGPHTKAVSGALLSLHFLFVRRNQGAEQWRSAQLLSLISSPPAMINPANSDTMACEYLSVEVMERWIIIGFLLCHGCLNSNSQCQKLWKLCLEGSLYITLIREDVLQVHKVTEDLFSSLKGYSKRVADIKESKEHAITNSGQFHCQRRQFLRTAVKELETVLNDEPGLLGPKALFAFMALSFIRDEVTWLVRHTENVTKTKTPEDYADSSIAELLFLLEEIRALVRRHIKVIQQYHLQYLARFDVLVLSDIIQNLSVCPEEESVIMSSFVSILSSLNLKQVDNEEKFDFSGLRLDWFRLQAYTSVSKAPLHLHENPDLAKVMNLIIFHSQMLDSVEKMLVETSDLSTFCFHLRTFEKMFATTLEEPTMLRYTIAFPLICAHFVHCVHEMCPEEYPHLKNHGLHHCNSFLEDLAKQTSNCVLEICAEQRNLNEQLLPKHCATTISKAKNKKSMKQRQAPRKGEPERDKPGAESHRKNRSLVTNMDKLHLNLTELALAMNHVHSFSVFEHTIFPSEYLSSHLEARLNRAIVTLAGYNATTQEILRPSELLAGVKAYISFIQSLAQFLGADASRIVRNALLQQTQPLDSSGEQTVTTLYTNWYLESLLRQASSGAIVLSPAMQAFISLPRDGEQNFSAEEFSDISEMRALAEILGPYGMKFLSENLMWHVTSQIVELKKLVVENMDILVQIRSNFSKPELMASLLPQLTGAENVLKRMTIIGVILSFRAMAQEGLQEVFSAHCPFLMGPIECLKEFVTPDTDIKVTLSVFELACAAGVSCDIDPALVAAIANLKADNSSPEEEYKVACLLLIFLAVSLPLLATDPSSFFSIEKDGYNNNIHCLTKAIIQVSAALFTLYNKNIETHLKEFLVVASVSLLQLGQETDKLKTRNRESISLLMRLVVEESPFLTLDMLESCFPYVLLRNAYREVSRAFYLNRLPASSH.

Residues 638-671 (KAKNKKSMKQRQAPRKGEPERDKPGAESHRKNRS) form a disordered region. The span at 639-651 (AKNKKSMKQRQAP) shows a compositional bias: basic residues. Over residues 652-666 (RKGEPERDKPGAESH) the composition is skewed to basic and acidic residues. A helical membrane pass occupies residues 999 to 1019 (LLLIFLAVSLPLLATDPSSFF).

As to quaternary structure, in hematopoietic cells, component of the WAVE2 complex composed of ABI1, CYFIP1/SRA1, NCKAP1L/HEM1 and WASF2/WAVE2. Interacts with ARHGAP4, PIK3C3/VPS34 and PPP1R12A/MYPT1. Interacts with mammalian target of rapamycin complex 2 (mTORC2) components, including MTOR and RICTOR. In terms of tissue distribution, predominantly expressed in developing and mature hematopoietic cells. Also detected in urogenital tissues, including testis.

The protein localises to the membrane. Its subcellular location is the cytoplasm. Its function is as follows. Essential hematopoietic-specific regulator of the actin cytoskeleton. Controls lymphocyte development, activation, proliferation and homeostasis, erythrocyte membrane stability, as well as phagocytosis and migration by neutrophils and macrophages. Component of the WAVE2 complex which signals downstream of RAC to stimulate F-actin polymerization. Required for stabilization and/or translation of the WAVE2 complex proteins in hematopoietic cells. Within the WAVE2 complex, enables the cortical actin network to restrain excessive degranulation and granule release by T-cells. Required for efficient T-lymphocyte and neutrophil migration. Exhibits complex cycles of activation and inhibition to generate waves of propagating the assembly with actin. Also involved in mechanisms WAVE independent to regulate myosin and actin polymerization during neutrophil chemotaxis. In T-cells, required for proper mechanistic target of rapamycin complex 2 (mTORC2)-dependent AKT phosphorylation, cell proliferation and cytokine secretion, including that of IL2 and TNF. The protein is Nck-associated protein 1-like of Mus musculus (Mouse).